A 220-amino-acid chain; its full sequence is Fructose-6-phosphate aldolase (220 aa).

Lys-85 serves as the catalytic Schiff-base intermediate with substrate.

The protein belongs to the transaldolase family. Type 3A subfamily. Homodecamer.

It is found in the cytoplasm. It catalyses the reaction beta-D-fructose 6-phosphate = dihydroxyacetone + D-glyceraldehyde 3-phosphate. In terms of biological role, catalyzes the reversible formation of fructose 6-phosphate from dihydroxyacetone and D-glyceraldehyde 3-phosphate via an aldolization reaction. The protein is Fructose-6-phosphate aldolase of Salmonella gallinarum (strain 287/91 / NCTC 13346).